A 346-amino-acid chain; its full sequence is Ion-translocating oxidoreductase complex subunit D (346 aa).

4 helical membrane passes run 20-40 (IMIQ…TFFG), 42-62 (GIII…GVVL), 69-91 (LASR…SLPP), and 120-140 (PFNP…VQMT). T187 is modified (FMN phosphoryl threonine). 5 consecutive transmembrane segments (helical) span residues 212-232 (ASAG…YLIW), 242-262 (LSLL…APVV), 264-284 (APPL…FIAT), 290-310 (AATV…VWLI), and 314-334 (GGYP…VPLI).

Belongs to the NqrB/RnfD family. As to quaternary structure, the complex is composed of six subunits: RnfA, RnfB, RnfC, RnfD, RnfE and RnfG. It depends on FMN as a cofactor.

The protein localises to the cell inner membrane. Part of a membrane-bound complex that couples electron transfer with translocation of ions across the membrane. The chain is Ion-translocating oxidoreductase complex subunit D from Sodalis glossinidius (strain morsitans).